Reading from the N-terminus, the 353-residue chain is MLKNDLFLRALRREPCERTPIWVMRQAGRYLPEYREVRSKADFVTLCKTPELAAEVTVQPIDIIGLDAAIIFSDILVIPEAMGMGLEIIESKGPRLYEPIRSAADIDRLVVPDVADKLGYVADAIRLTKKQLDDRVPLIGFAGAAWTLFTYAVEGGGSKNYRFAKELIYNHPDQAHKLLGKISQVITDFLLLQIEVGVNAVQIFDSWASALSEDDYKTFALPYIKQSVEAVKSKHPDIPVIVFAKDANTILTDLADTGCDALGLSWNIDIARARQELNDRVALQGNLDPTVLYASPERIREEAGKILAKFGQHTEKSGHVFNLGHGILPDVNPEHLKALVDFIKEESGKYHQA.

Residues 25–29, aspartate 74, tyrosine 151, serine 206, and histidine 325 each bind substrate; that span reads RQAGR.

This sequence belongs to the uroporphyrinogen decarboxylase family. Homodimer.

It is found in the cytoplasm. It carries out the reaction uroporphyrinogen III + 4 H(+) = coproporphyrinogen III + 4 CO2. It functions in the pathway porphyrin-containing compound metabolism; protoporphyrin-IX biosynthesis; coproporphyrinogen-III from 5-aminolevulinate: step 4/4. Functionally, catalyzes the decarboxylation of four acetate groups of uroporphyrinogen-III to yield coproporphyrinogen-III. This chain is Uroporphyrinogen decarboxylase, found in Chloroherpeton thalassium (strain ATCC 35110 / GB-78).